The chain runs to 318 residues: L-lactate dehydrogenase 1 (318 aa).

Residues valine 17, aspartate 38, lysine 43, tyrosine 69, and 83–84 (GA) each bind NAD(+). Residues glutamine 86, arginine 92, and 124–127 (NPVD) contribute to the substrate site. NAD(+)-binding positions include 122-124 (ATN) and serine 147. A substrate-binding site is contributed by 152–155 (DTGR). Residues arginine 157 and histidine 172 each contribute to the beta-D-fructose 1,6-bisphosphate site. The active-site Proton acceptor is histidine 179. A Phosphotyrosine modification is found at tyrosine 224. Substrate is bound at residue threonine 233.

It belongs to the LDH/MDH superfamily. LDH family. Homotetramer.

The protein resides in the cytoplasm. It catalyses the reaction (S)-lactate + NAD(+) = pyruvate + NADH + H(+). It participates in fermentation; pyruvate fermentation to lactate; (S)-lactate from pyruvate: step 1/1. With respect to regulation, allosterically activated by fructose 1,6-bisphosphate (FBP). Functionally, catalyzes the conversion of lactate to pyruvate. In Peribacillus psychrosaccharolyticus (Bacillus psychrosaccharolyticus), this protein is L-lactate dehydrogenase 1.